A 240-amino-acid polypeptide reads, in one-letter code: Uridylate kinase (240 aa).

12–15 (KLSG) is a binding site for ATP. The interval 20 to 25 (GEQGFG) is involved in allosteric activation by GTP. UMP is bound at residue Gly-54. The ATP site is built by Gly-55 and Arg-59. UMP is bound by residues Asp-74 and 135-142 (TGNPYFST). 3 residues coordinate ATP: Asn-163, Tyr-169, and Asp-172.

It belongs to the UMP kinase family. As to quaternary structure, homohexamer.

Its subcellular location is the cytoplasm. It catalyses the reaction UMP + ATP = UDP + ADP. It functions in the pathway pyrimidine metabolism; CTP biosynthesis via de novo pathway; UDP from UMP (UMPK route): step 1/1. With respect to regulation, allosterically activated by GTP. Inhibited by UTP. Catalyzes the reversible phosphorylation of UMP to UDP. The chain is Uridylate kinase from Bacillus cereus (strain ATCC 14579 / DSM 31 / CCUG 7414 / JCM 2152 / NBRC 15305 / NCIMB 9373 / NCTC 2599 / NRRL B-3711).